Here is a 331-residue protein sequence, read N- to C-terminus: Retinol dehydrogenase 13 (331 aa).

The residue at position 2 (serine 2) is an N-acetylserine. Position 45–51 (45–51 (GANTGIG)) interacts with NADP(+). Serine 174 contacts substrate. Tyrosine 200 (proton acceptor) is an active-site residue. Serine 323 carries the post-translational modification Phosphoserine.

This sequence belongs to the short-chain dehydrogenases/reductases (SDR) family. In terms of tissue distribution, widely expressed. In the retina, detected in the inner segment of the photoreceptor cells. Weak signals are observed in a small population of inner nuclear neurons and the inner plexiform layer.

Its subcellular location is the mitochondrion inner membrane. The catalysed reaction is all-trans-retinol + NADP(+) = all-trans-retinal + NADPH + H(+). It participates in cofactor metabolism; retinol metabolism. Functionally, retinol dehydrogenase with a clear preference for NADP. Oxidizes all-trans-retinol, but seems to reduce all-trans-retinal with much higher efficiency. Has no activity toward steroids. This is Retinol dehydrogenase 13 (RDH13) from Homo sapiens (Human).